The following is a 60-amino-acid chain: Toxin FS-2 (60 aa).

Intrachain disulfides connect C3–C22, C17–C39, C41–C52, and C53–C58. Positions 41–48 are important for binding to L-type calcium channels; that stretch reads CPTAMWPY.

The protein belongs to the three-finger toxin family. Short-chain subfamily. L-type calcium blocker sub-subfamily. In terms of tissue distribution, expressed by the venom gland.

The protein resides in the secreted. Specific blocker of the voltage-dependent L-type calcium channel (Cav1/CACNA1). Inhibits cardiac contractions. In Dendroaspis polylepis polylepis (Black mamba), this protein is Toxin FS-2.